The chain runs to 563 residues: Arginine--tRNA ligase (563 aa).

The 'HIGH' region signature appears at Pro121–His131.

Belongs to the class-I aminoacyl-tRNA synthetase family. In terms of assembly, monomer.

It is found in the cytoplasm. It catalyses the reaction tRNA(Arg) + L-arginine + ATP = L-arginyl-tRNA(Arg) + AMP + diphosphate. In Streptococcus pyogenes serotype M18 (strain MGAS8232), this protein is Arginine--tRNA ligase.